Consider the following 602-residue polypeptide: Solute carrier organic anion transporter family member 1C1 (602 aa).

Over methionine 1–lysine 43 the chain is Cytoplasmic. Residues valine 44–leucine 63 form a helical membrane-spanning segment. At lysine 64–glycine 82 the chain is on the extracellular side. A helical membrane pass occupies residues valine 83–glycine 103. Over alanine 104–proline 109 the chain is Cytoplasmic. A helical transmembrane segment spans residues lysine 110–glutamate 134. Residues glutamine 135 to glutamate 139 are Extracellular-facing. Residues isoleucine 140–leucine 156 form a helical membrane-spanning segment. At glutamate 157–tyrosine 238 the chain is on the cytoplasmic side. The disordered stretch occupies residues proline 190–glutamine 216. The segment covering glutamine 193–aspartate 214 has biased composition (basic and acidic residues). A helical transmembrane segment spans residues leucine 239–phenylalanine 260. At glycine 261–arginine 280 the chain is on the extracellular side. Residues alanine 281–methionine 304 traverse the membrane as a helical segment. At lysine 305–arginine 308 the chain is on the cytoplasmic side. Residues isoleucine 309–leucine 332 traverse the membrane as a helical segment. Over phenylalanine 333–phenylalanine 444 the chain is Extracellular. Positions arginine 360–glycine 415 constitute a Kazal-like domain. Disulfide bonds link cysteine 366–cysteine 396, cysteine 372–cysteine 392, and cysteine 381–cysteine 413. Residues asparagine 400, asparagine 410, and asparagine 423 are each glycosylated (N-linked (GlcNAc...) asparagine). The chain crosses the membrane as a helical span at residues leucine 445–leucine 467. Over arginine 468 to serine 476 the chain is Cytoplasmic. A helical transmembrane segment spans residues phenylalanine 477–isoleucine 502. Residues aspartate 503–threonine 536 lie on the Extracellular side of the membrane. Residues valine 537–leucine 554 traverse the membrane as a helical segment. Residues lysine 555–leucine 602 are Cytoplasmic-facing.

It belongs to the organo anion transporter (TC 2.A.60) family.

The protein localises to the cell membrane. The enzyme catalyses 3,3',5'-triiodo-L-thyronine(out) = 3,3',5'-triiodo-L-thyronine(in). It carries out the reaction L-thyroxine(out) = L-thyroxine(in). It catalyses the reaction L-thyroxine sulfate(out) = L-thyroxine sulfate(in). In terms of biological role, mediates the Na(+)-independent high affinity transport of organic anions such as the thyroid hormones L-thyroxine (T4), L-thyroxine sulfate (T4S), and 3,3',5'-triiodo-L-thyronine (reverse T3, rT3) at the plasma membrane. Regulates T4 levels in different brain regions by transporting T4, and also by serving as an export pump for T4S, which is a source of T4 after hydrolysis by local sulfatases. Increases the access of these substrates to the intracellular sites where they are metabolized by the deiodinases. Other potential substrates, such as triiodothyronine (T3), 17-beta-glucuronosyl estradiol (17beta-estradiol 17-O-(beta-D-glucuronate)), estrone-3-sulfate (E1S) and sulfobromophthalein (BSP) are transported with much lower efficiency. Transports T4 and E1S in a pH-insensitive manner. Facilitates the transport of thyroid hormones across the blood-brain barrier and into glia and neuronal cells in the brain. This Macaca fascicularis (Crab-eating macaque) protein is Solute carrier organic anion transporter family member 1C1 (SLCO1C1).